Reading from the N-terminus, the 1183-residue chain is Protein deacetylase HDAC6 (1183 aa).

The disordered stretch occupies residues 1–61 (MTSTGQDSST…KGKMKKLSQP (61 aa)). Residues 18–29 (NPQSPLQDSSAT) are compositionally biased toward polar residues. The residue at position 21 (serine 21) is a Phosphoserine. Position 32 is an omega-N-methylarginine (arginine 32). Residues 66-75 (LIVGLQGLDL) carry the Nuclear export signal motif. 2 histone deacetylase regions span residues 86 to 434 (GLVF…TLLG) and 512 to 830 (GLVY…SLLG). The active-site 1 is histidine 215. Histidine 641 acts as the 2 in catalysis. The disordered stretch occupies residues 972-1042 (ATENSANQTT…EAQEVQESEE (71 aa)). Residues 980 to 996 (TTSGEEASGETESFGTS) are compositionally biased toward low complexity. Threonine 990, threonine 995, and threonine 1005 each carry phosphothreonine. Positions 997–1008 (PSSNASKQTTGA) are enriched in polar residues. At serine 1009 the chain carries Phosphoserine. The segment covering 1021–1035 (ELGLSSTLELSSEAQ) has biased composition (low complexity). Residues 1079–1177 (SWCPHLMAVC…NAAHQNKFGE (99 aa)) form a UBP-type zinc finger. Cysteine 1081, histidine 1083, cysteine 1101, cysteine 1104, cysteine 1113, cysteine 1116, and cysteine 1121 together coordinate Zn(2+). The interval 1122–1124 (SRY) is ubiquitin binding. Residues histidine 1128, histidine 1132, histidine 1138, cysteine 1151, and cysteine 1154 each coordinate Zn(2+). Residues 1150 to 1157 (WCYLCQAY) are ubiquitin binding.

This sequence belongs to the histone deacetylase family. HD type 2 subfamily. As to quaternary structure, forms a trimeric complex in the nucleus consisting of BANP, HDAC6 and KHDRBS1/SAM68; HDAC6 keeps KHDRBS1 in a deacetylated state which inhibits the inclusion of CD44 alternate exons. The complex is disrupted by MAPK1/MAPK3-mediated phosphorylation of BANP which results in BANP export to the cytoplasm. This facilitates acetylation of KHDRBS1 and CD44 variant exon inclusion. Interacts with SIRT2 (via both phosphorylated, unphosphorylated, active or inactive forms); the interaction is necessary for the complex to interact with alpha-tubulin. Under proteasome impairment conditions, interacts with UBD via its histone deacetylase 1 and UBP-type zinc-finger regions. Interacts with BBIP1, CBFA2T3, CYLD, DDIT3/CHOP, ZMYND15, F-actin and HDAC11. Interacts with RIPOR2; this interaction occurs during early myogenic differentiation and prevents HDAC6 to deacetylate tubulin. Interacts with AURKA; AURKA-mediated phosphorylation of HDAC6 promotes deacetylation of alpha-tubulin. Interacts with DYSF; this interaction occurs during early myogenic differentiation. Interacts with TPPP; inhibiting the tubulin deacetylase activity of HDAC6. Interacts with DYNLL1. Interacts with ATP13A2; the interaction results in recruitment of HDAC6 to lysosomes to promote CTTN deacetylation. Interacts with CCDC141 (via the N-terminal region); inhibiting the deacetylase activity of HDAC6. Interacts with IPO7; the interaction facilitates HDAC6 nuclear translocation in dental papilla cells. It depends on Zn(2+) as a cofactor. Phosphorylated by AURKA; phosphorylation increases HDAC6-mediated deacetylation of alpha-tubulin and subsequent disassembly of cilia. In terms of processing, ubiquitinated. Its polyubiquitination however does not lead to its degradation. Post-translationally, sumoylated in vitro.

The protein localises to the cytoplasm. Its subcellular location is the cytoskeleton. The protein resides in the nucleus. It localises to the perikaryon. It is found in the cell projection. The protein localises to the dendrite. Its subcellular location is the axon. The protein resides in the cilium. It localises to the microtubule organizing center. It is found in the centrosome. The protein localises to the cilium basal body. It catalyses the reaction N(6)-acetyl-L-lysyl-[protein] + H2O = L-lysyl-[protein] + acetate. It carries out the reaction N(6)-acetyl-L-lysyl-[alpha-tubulin] + H2O = L-lysyl-[alpha-tubulin] + acetate. The protein operates within protein modification; protein ubiquitination. In terms of biological role, deacetylates a wide range of non-histone substrates. Plays a central role in microtubule-dependent cell motility by mediating deacetylation of tubulin. Required for cilia disassembly via deacetylation of alpha-tubulin. Alpha-tubulin deacetylation results in destabilization of dynamic microtubules. Promotes deacetylation of CTTN, leading to actin polymerization, promotion of autophagosome-lysosome fusion and completion of autophagy. Deacetylates SQSTM1. Deacetylates peroxiredoxins PRDX1 and PRDX2, decreasing their reducing activity. Deacetylates antiviral protein RIGI in the presence of viral mRNAs which is required for viral RNA detection by RIGI. Sequentially deacetylates and polyubiquitinates DNA mismatch repair protein MSH2 which leads to MSH2 degradation, reducing cellular sensitivity to DNA-damaging agents and decreasing cellular DNA mismatch repair activities. Deacetylates DNA mismatch repair protein MLH1 which prevents recruitment of the MutL alpha complex (formed by the MLH1-PMS2 heterodimer) to the MutS alpha complex (formed by the MSH2-MSH6 heterodimer), leading to tolerance of DNA damage. Deacetylates RHOT1/MIRO1 which blocks mitochondrial transport and mediates axon growth inhibition. Deacetylates transcription factor SP1 which leads to increased expression of ENG, positively regulating angiogenesis. Deacetylates KHDRBS1/SAM68 which regulates alternative splicing by inhibiting the inclusion of CD44 alternate exons. Promotes odontoblast differentiation following IPO7-mediated nuclear import and subsequent repression of RUNX2 expression. In addition to its protein deacetylase activity, plays a key role in the degradation of misfolded proteins: when misfolded proteins are too abundant to be degraded by the chaperone refolding system and the ubiquitin-proteasome, mediates the transport of misfolded proteins to a cytoplasmic juxtanuclear structure called aggresome. Probably acts as an adapter that recognizes polyubiquitinated misfolded proteins and targets them to the aggresome, facilitating their clearance by autophagy. This is Protein deacetylase HDAC6 from Rattus norvegicus (Rat).